The primary structure comprises 210 residues: Glutathione S-transferase P (210 aa).

Positions 2–81 constitute a GST N-terminal domain; that stretch reads PPYTIVYFPV…HLGRSLGLYG (80 aa). The residue at position 4 (tyrosine 4) is a Phosphotyrosine; by EGFR. Glutathione-binding positions include tyrosine 8, arginine 14, tryptophan 39, lysine 45, and 52–53; that span reads QL. Position 62 is a phosphothreonine (threonine 62). 65-66 lines the glutathione pocket; that stretch reads QS. The 122-residue stretch at 83–204 folds into the GST C-terminal domain; it reads DQREAALVDM…SSPDHVNRPI (122 aa). Lysine 103 and lysine 116 each carry N6-succinyllysine. The residue at position 128 (lysine 128) is an N6-acetyllysine.

The protein belongs to the GST superfamily. Pi family. Homodimer. Interacts with CDK5.

It is found in the cytoplasm. It localises to the mitochondrion. The protein localises to the nucleus. The catalysed reaction is RX + glutathione = an S-substituted glutathione + a halide anion + H(+). It catalyses the reaction prostaglandin J2 + glutathione = prostaglandin J2-S-(R)-glutathione. The enzyme catalyses prostaglandin J2 + glutathione = prostaglandin J2-S-(S)-glutathione. It carries out the reaction prostaglandin A2 + glutathione = prostaglandin A2-S-(S)-glutathione. The catalysed reaction is 11(S)-hydroxy-14(S),15(S)-epoxy-(5Z,8Z,12E)-eicosatrienoate + glutathione = (11S,15S)-dihydroxy-14(R)-S-glutathionyl-(5Z,8Z,12E)-eicosatrienoate. In terms of biological role, conjugation of reduced glutathione to a wide number of exogenous and endogenous hydrophobic electrophiles. Involved in the formation of glutathione conjugates of both prostaglandin A2 (PGA2) and prostaglandin J2 (PGJ2). Participates in the formation of novel hepoxilin regioisomers. Negatively regulates CDK5 activity via p25/p35 translocation to prevent neurodegeneration. This Cricetulus longicaudatus (Long-tailed dwarf hamster) protein is Glutathione S-transferase P (GSTP1).